A 126-amino-acid chain; its full sequence is MSWQAYTDNLIGTGKVDKAVIYSRAGDAVWATSGGLSLQPNEIGEIVQGFDNPAGLQSNGLHIQGQKFMLLRADDRSIYGRHDAEGVVCVRTKQTVIIAHYPPTVQAGEATKIVEQLADYLIGVQY.

This sequence belongs to the profilin family. As to quaternary structure, occurs in many kinds of cells as a complex with monomeric actin in a 1:1 ratio.

It is found in the cytoplasm. The protein localises to the cytoskeleton. Binds to actin and affects the structure of the cytoskeleton. At high concentrations, profilin prevents the polymerization of actin, whereas it enhances it at low concentrations. By binding to PIP2, it inhibits the formation of IP3 and DG. This is Profilin (PFY1) from Saccharomyces cerevisiae (strain ATCC 204508 / S288c) (Baker's yeast).